The chain runs to 154 residues: MRAVIQRAKSGSVTVDSKIVSQISHGLVVLIGVGHEDTAEDVEKVANKIIKTKLWPSVDGAQQWKQSVLDVGGEVLCVSQFTLFAKVKKGQKPDFHNAAKGPQAKELYDQVLAKIQAALPEGRTVKDGVFGAMMDVALVNDGPVTIQYDTKNDK.

The Gly-cisPro motif, important for rejection of L-amino acids motif lies at 142–143 (GP).

The protein belongs to the DTD family. As to quaternary structure, homodimer.

The protein localises to the cytoplasm. It carries out the reaction glycyl-tRNA(Ala) + H2O = tRNA(Ala) + glycine + H(+). The catalysed reaction is a D-aminoacyl-tRNA + H2O = a tRNA + a D-alpha-amino acid + H(+). Its function is as follows. An aminoacyl-tRNA editing enzyme that deacylates mischarged D-aminoacyl-tRNAs. Also deacylates mischarged glycyl-tRNA(Ala), protecting cells against glycine mischarging by AlaRS. Acts via tRNA-based rather than protein-based catalysis; rejects L-amino acids rather than detecting D-amino acids in the active site. By recycling D-aminoacyl-tRNA to D-amino acids and free tRNA molecules, this enzyme counteracts the toxicity associated with the formation of D-aminoacyl-tRNA entities in vivo and helps enforce protein L-homochirality. The protein is D-aminoacyl-tRNA deacylase (DTD1) of Yarrowia lipolytica (strain CLIB 122 / E 150) (Yeast).